The sequence spans 347 residues: tRNA N6-adenosine threonylcarbamoyltransferase (347 aa).

Residues His-115 and His-119 each contribute to the Fe cation site. Residues 137 to 141 (LASGG), Asp-170, Gly-183, and Asn-281 contribute to the substrate site. Asp-309 contributes to the Fe cation binding site.

This sequence belongs to the KAE1 / TsaD family. Fe(2+) is required as a cofactor.

The protein resides in the cytoplasm. The enzyme catalyses L-threonylcarbamoyladenylate + adenosine(37) in tRNA = N(6)-L-threonylcarbamoyladenosine(37) in tRNA + AMP + H(+). Its function is as follows. Required for the formation of a threonylcarbamoyl group on adenosine at position 37 (t(6)A37) in tRNAs that read codons beginning with adenine. Is involved in the transfer of the threonylcarbamoyl moiety of threonylcarbamoyl-AMP (TC-AMP) to the N6 group of A37, together with TsaE and TsaB. TsaD likely plays a direct catalytic role in this reaction. The polypeptide is tRNA N6-adenosine threonylcarbamoyltransferase (Methylorubrum extorquens (strain CM4 / NCIMB 13688) (Methylobacterium extorquens)).